Consider the following 204-residue polypeptide: uncharacterized protein (204 aa).

Residues 160–180 form a helical membrane-spanning segment; the sequence is GLTVAAIASVVVAGAVTYLVV.

The protein to M.pneumoniae MPN_373 C-terminal region.

Its subcellular location is the cell membrane. This is an uncharacterized protein from Mycoplasma pneumoniae (strain ATCC 29342 / M129 / Subtype 1) (Mycoplasmoides pneumoniae).